Reading from the N-terminus, the 420-residue chain is Glutamyl-tRNA reductase (420 aa).

Residues 49–52, serine 110, 115–117, and glutamine 121 each bind substrate; these read TCNR and EHQ. The active-site Nucleophile is the cysteine 50. 190-195 is a binding site for NADP(+); sequence GSGTIN.

The protein belongs to the glutamyl-tRNA reductase family. As to quaternary structure, homodimer.

The catalysed reaction is (S)-4-amino-5-oxopentanoate + tRNA(Glu) + NADP(+) = L-glutamyl-tRNA(Glu) + NADPH + H(+). Its pathway is porphyrin-containing compound metabolism; protoporphyrin-IX biosynthesis; 5-aminolevulinate from L-glutamyl-tRNA(Glu): step 1/2. Functionally, catalyzes the NADPH-dependent reduction of glutamyl-tRNA(Glu) to glutamate 1-semialdehyde (GSA). In Wigglesworthia glossinidia brevipalpis, this protein is Glutamyl-tRNA reductase.